The chain runs to 664 residues: MSEHKKSSKIIGIDLGTTNSCVSVMEGGQAKVITSSEGTRTTPSIVAFKGSETLVGIPAKRQAVTNPEKTLASTKRFIGRKYSEVESEIKTVPYKVTSGSNGDAVFQVEGKQYTPEEIGAHILMKMKETAEAYLGETITEAVITVPAYFNDSQRASTKDAGRIAGLDVKRIIPEPTAAALAYGIDKAGDKKIAVFDLGGGTFDISILEIGDGVFEVLSTNGDTHLGGDDFDEVIIKWMIEEFQKQEGIDLGKDNMALQRLKDAAEKAKIELSGMSSTEINQPFITMDANGPKHLTLTLTRAHFEKLASNLIERTKAPCIKALADAKLSASDIDDVLLVGGMSRMPAVQEIVKDIFGKEPNKGVNPDEVVAIGAAIQGGVLGGEVKDVLLLDVIPLSLGIETLGGVMTPLVERNTTIPTQKKQIFSTAADNQPAVTIVVLQGERPMAKDNKEIGRFDLTDIPPAPRGHPQIEVTFDIDANGILHVSAKDAASGREQKIRIEASSGLKEDEIQRMIRDAEQNKEEDKKRREASDVRNEADSMIFRAEKAINDYKANIPESLVKEIEERVEKVRSALKEDASTEKIKEASEELSRHMQKIGEAMQSQSASAAPSSAANAQGGPNINTEDLKKHSFSTKPPAGNSTSASSNNENIEEADVEIVDKPND.

T201 carries the post-translational modification Phosphothreonine; by autocatalysis. Positions 574 to 592 (LKEDASTEKIKEASEELSR) are enriched in basic and acidic residues. Residues 574-664 (LKEDASTEKI…DVEIVDKPND (91 aa)) are disordered. Low complexity predominate over residues 600-617 (AMQSQSASAAPSSAANAQ). Positions 639 to 649 (GNSTSASSNNE) are enriched in polar residues.

This sequence belongs to the heat shock protein 70 family.

Functionally, acts as a chaperone. The polypeptide is Chaperone protein DnaK (Chlamydia felis (strain Fe/C-56) (Chlamydophila felis)).